We begin with the raw amino-acid sequence, 147 residues long: MTKKTKPETYVFSQNFPISADKARRVIDRIRGRSYEETLVILELLPYRAAYPIFKFVCFAASNASSTSTSKKENLFISKAEVNERPAIKKLKPRARGRSYPIKKATCHITIVLTDLSFYFNELVEPQQEKNLLTKLYLNLRGLWDKK.

It belongs to the universal ribosomal protein uL22 family. Part of the 50S ribosomal subunit.

The protein resides in the plastid. This protein binds specifically to 23S rRNA. Functionally, the globular domain of the protein is located near the polypeptide exit tunnel on the outside of the subunit, while an extended beta-hairpin is found that lines the wall of the exit tunnel in the center of the 70S ribosome. The chain is Large ribosomal subunit protein uL22c (rpl22) from Cuscuta gronovii (Common dodder).